Reading from the N-terminus, the 243-residue chain is tRNA pseudouridine synthase A (243 aa).

Asp-53 acts as the Nucleophile in catalysis. Tyr-111 is a binding site for substrate.

This sequence belongs to the tRNA pseudouridine synthase TruA family. In terms of assembly, homodimer.

The catalysed reaction is uridine(38/39/40) in tRNA = pseudouridine(38/39/40) in tRNA. Functionally, formation of pseudouridine at positions 38, 39 and 40 in the anticodon stem and loop of transfer RNAs. This chain is tRNA pseudouridine synthase A, found in Chlorobium chlorochromatii (strain CaD3).